A 659-amino-acid chain; its full sequence is Anoctamin-10 (659 aa).

At 1-207 (MRVTLSTLDT…DSIRSYFGET (207 aa)) the chain is on the cytoplasmic side. The helical transmembrane segment at 208-228 (IALYFGFLEYFTFALIPMAII) threads the bilayer. Residues 229 to 240 (GLPYYLFVWEDY) are Extracellular-facing. A helical transmembrane segment spans residues 241–261 (DKYVIFASFNLIWSTVILEVW). At 262–316 (KRGCANMTYRWGTLVMKRQFEEPRPGFHGVLGINSVTGREEPLYSSYKRQLRIYL) the chain is on the cytoplasmic side. The chain crosses the membrane as a helical span at residues 317–337 (VSLPFVCLCLYFSLYVMMIYF). Residues 338–352 (DMEDWALSLHEDSGS) lie on the Extracellular side of the membrane. The helical transmembrane segment at 353–373 (EWTSLLLYVPSIVYAVVIEIM) threads the bilayer. Residues 374 to 400 (NRLYRYAAEFLTSWENHRLESAYQNHL) are Cytoplasmic-facing. A helical transmembrane segment spans residues 401–421 (VLKVLVFNFLNCFASLFYIAF). The Extracellular portion of the chain corresponds to 422-500 (VLKDMKLLRQ…YLGTFDDYLE (79 aa)). The chain crosses the membrane as a helical span at residues 501 to 521 (LFLQFGYVSLFSCVYPLAAAF). Residues 522-553 (AVLNNFTEVNSDALKMCRVFKRPFAEPSASIG) lie on the Cytoplasmic side of the membrane. Residues 554–574 (VWQLAFETMSVISVVTNCALI) traverse the membrane as a helical segment. At 575–590 (GMSPQVNAVFPESKTD) the chain is on the extracellular side. A helical transmembrane segment spans residues 591–611 (LVLIVVAVEHALLALKFILAF). The Cytoplasmic segment spans residues 612–659 (AIPDKPRHIQQKLARLEFESLEALKQQQMKLVAENLKEEYQEDGKEAT).

It belongs to the anoctamin family. In terms of tissue distribution, predominant expression seen in epithelial tissues.

The protein localises to the cell membrane. Does not exhibit calcium-activated chloride channel (CaCC) activity. Can inhibit the activity of ANO1. This chain is Anoctamin-10 (Ano10), found in Mus musculus (Mouse).